A 565-amino-acid polypeptide reads, in one-letter code: Proline--tRNA ligase (565 aa).

Belongs to the class-II aminoacyl-tRNA synthetase family. ProS type 1 subfamily. In terms of assembly, homodimer.

It is found in the cytoplasm. It carries out the reaction tRNA(Pro) + L-proline + ATP = L-prolyl-tRNA(Pro) + AMP + diphosphate. Catalyzes the attachment of proline to tRNA(Pro) in a two-step reaction: proline is first activated by ATP to form Pro-AMP and then transferred to the acceptor end of tRNA(Pro). As ProRS can inadvertently accommodate and process non-cognate amino acids such as alanine and cysteine, to avoid such errors it has two additional distinct editing activities against alanine. One activity is designated as 'pretransfer' editing and involves the tRNA(Pro)-independent hydrolysis of activated Ala-AMP. The other activity is designated 'posttransfer' editing and involves deacylation of mischarged Ala-tRNA(Pro). The misacylated Cys-tRNA(Pro) is not edited by ProRS. This is Proline--tRNA ligase from Francisella tularensis subsp. novicida (strain U112).